Consider the following 706-residue polypeptide: Elongation factor G (706 aa).

Residues 15-291 (LKTRNIGISA…GVLDYLASPV (277 aa)) form the tr-type G domain. GTP is bound by residues 24–31 (AHIDSGKT), 91–95 (DTPGH), and 145–148 (NKLD).

Belongs to the TRAFAC class translation factor GTPase superfamily. Classic translation factor GTPase family. EF-G/EF-2 subfamily.

The protein resides in the cytoplasm. Its function is as follows. Catalyzes the GTP-dependent ribosomal translocation step during translation elongation. During this step, the ribosome changes from the pre-translocational (PRE) to the post-translocational (POST) state as the newly formed A-site-bound peptidyl-tRNA and P-site-bound deacylated tRNA move to the P and E sites, respectively. Catalyzes the coordinated movement of the two tRNA molecules, the mRNA and conformational changes in the ribosome. This Leptospira interrogans serogroup Icterohaemorrhagiae serovar copenhageni (strain Fiocruz L1-130) protein is Elongation factor G.